Here is a 212-residue protein sequence, read N- to C-terminus: MQNRPIIIGVTGGSGGGKTSVSRAILSHFPDEKISMIEHDSYYKDQSHLTFEERVKTNYDHPFAFDTDLMIEQIKELLAGRPVDIPTYDYTEHTRSSKTYRQEPQDVFIVEGILVLEDKRLRDLMDIKIFVDTDDDVRIIRRIKRDMEERGRSLDSVINQYLGVVKPMYHQFIESTKRYADIVIPEGVSNTVAIDLLTTKIAKILEEARNSK.

12–19 (GGSGGGKT) contributes to the ATP binding site.

This sequence belongs to the uridine kinase family.

It localises to the cytoplasm. The enzyme catalyses uridine + ATP = UMP + ADP + H(+). It catalyses the reaction cytidine + ATP = CMP + ADP + H(+). The protein operates within pyrimidine metabolism; CTP biosynthesis via salvage pathway; CTP from cytidine: step 1/3. Its pathway is pyrimidine metabolism; UMP biosynthesis via salvage pathway; UMP from uridine: step 1/1. This chain is Uridine kinase, found in Streptococcus pneumoniae serotype 2 (strain D39 / NCTC 7466).